We begin with the raw amino-acid sequence, 110 residues long: Thiosulfate sulfurtransferase GlpE (110 aa).

The region spanning 17 to 105 is the Rhodanese domain; sequence KKEGAVVVDI…WRATYPAETA (89 aa). Cysteine 65 (cysteine persulfide intermediate) is an active-site residue.

The protein belongs to the GlpE family.

Its subcellular location is the cytoplasm. It carries out the reaction thiosulfate + hydrogen cyanide = thiocyanate + sulfite + 2 H(+). It catalyses the reaction thiosulfate + [thioredoxin]-dithiol = [thioredoxin]-disulfide + hydrogen sulfide + sulfite + 2 H(+). Functionally, transferase that catalyzes the transfer of sulfur from thiosulfate to thiophilic acceptors such as cyanide or dithiols. May function in a CysM-independent thiosulfate assimilation pathway by catalyzing the conversion of thiosulfate to sulfite, which can then be used for L-cysteine biosynthesis. The sequence is that of Thiosulfate sulfurtransferase GlpE from Pseudomonas putida (strain ATCC 700007 / DSM 6899 / JCM 31910 / BCRC 17059 / LMG 24140 / F1).